The primary structure comprises 457 residues: tRNA-2-methylthio-N(6)-dimethylallyladenosine synthase (457 aa).

The 118-residue stretch at 3–120 (KKVYVKTFGC…LPQMIDQRRA (118 aa)) folds into the MTTase N-terminal domain. 6 residues coordinate [4Fe-4S] cluster: Cys12, Cys49, Cys83, Cys157, Cys161, and Cys164. Positions 143–377 (RVEGPSAFVS…QATIEENVAR (235 aa)) constitute a Radical SAM core domain. In terms of domain architecture, TRAM spans 380–447 (RSMVGKVERI…PHSLRGELLL (68 aa)).

It belongs to the methylthiotransferase family. MiaB subfamily. Monomer. [4Fe-4S] cluster serves as cofactor.

It is found in the cytoplasm. It catalyses the reaction N(6)-dimethylallyladenosine(37) in tRNA + (sulfur carrier)-SH + AH2 + 2 S-adenosyl-L-methionine = 2-methylsulfanyl-N(6)-dimethylallyladenosine(37) in tRNA + (sulfur carrier)-H + 5'-deoxyadenosine + L-methionine + A + S-adenosyl-L-homocysteine + 2 H(+). Functionally, catalyzes the methylthiolation of N6-(dimethylallyl)adenosine (i(6)A), leading to the formation of 2-methylthio-N6-(dimethylallyl)adenosine (ms(2)i(6)A) at position 37 in tRNAs that read codons beginning with uridine. The chain is tRNA-2-methylthio-N(6)-dimethylallyladenosine synthase from Burkholderia ambifaria (strain ATCC BAA-244 / DSM 16087 / CCUG 44356 / LMG 19182 / AMMD) (Burkholderia cepacia (strain AMMD)).